The primary structure comprises 313 residues: MQHLLSAGDLTRDEALLILDTARELSQVSERSVKKLPTLRGRTVVNLFYEDSTRTRISFEAAAKRMSADVINFSARGSSVSKGESLKDTALTLQAMGADGVVIRHSAPGAARRLADWVDGVVINAGDGTHEHPTQALLDAYTMRERLGRVEGLRVAIVGDIRHSRVARSNVLLLTTLGAEVTLVAPPTLLPVSVDTWPCAVSYDLDEVLPKSDVVMMLRVQAERMHSSFFPSAREYSRRYGLDADRLARMADHAIVMHPGPMVRGMEISAEVADSARSTVTEQVTNGVSVRMAVLYLLLGGAIHRPGNQGEPR.

Carbamoyl phosphate contacts are provided by R54 and T55. An L-aspartate-binding site is contributed by K82. Carbamoyl phosphate contacts are provided by R104, H132, and Q135. Positions 165 and 219 each coordinate L-aspartate. G260 and P261 together coordinate carbamoyl phosphate.

This sequence belongs to the aspartate/ornithine carbamoyltransferase superfamily. ATCase family. In terms of assembly, heterododecamer (2C3:3R2) of six catalytic PyrB chains organized as two trimers (C3), and six regulatory PyrI chains organized as three dimers (R2).

It carries out the reaction carbamoyl phosphate + L-aspartate = N-carbamoyl-L-aspartate + phosphate + H(+). It participates in pyrimidine metabolism; UMP biosynthesis via de novo pathway; (S)-dihydroorotate from bicarbonate: step 2/3. Functionally, catalyzes the condensation of carbamoyl phosphate and aspartate to form carbamoyl aspartate and inorganic phosphate, the committed step in the de novo pyrimidine nucleotide biosynthesis pathway. In Thermobifida fusca (strain YX), this protein is Aspartate carbamoyltransferase catalytic subunit.